The sequence spans 494 residues: MPRVYIGRLSYQARERDVERFFKGYGKILEVDLKNGYGFVEFDDLRDADDAVYELNGKDLCGERVIVEHARGPRRDGSYGSGRSGYGYRRSGRDKYGPPTRTEYRLIVENLSSRCSWQDLKDYMRQAGEVTYADAHKGRKNEGVIEFVSYSDMKRALEKLDGTEVNGRKIRLVEDKPGSRRRRSYSRSRSHSRSRSRSRHSRKSRSRSGSSKSSHSKSRSRSRSGSRSRSKSRSRSQSRSRSKKEKSRSPSKEKSRSRSHSAGKSRSKSKDQAEEKIQNNDNVGKPKSRSPSRHKSKSKSRSRSQERRVEEEKRGSVSRGRSQEKSLRQSRSRSRSKGGSRSRSRSRSKSKDKRKGRKRSREESRSRSRSRSKSERSRKRGSKRDSKAGSSKKKKKEDTDRSQSRSPSRSVSKEREHAKSESSQREGRGESENAGTNQETRSRSRSNSKSKPNLPSESRSRSKSASKTRSRSKSRSRSASRSPSRSRSRSHSRS.

The RRM 1 domain occupies 2 to 72 (PRVYIGRLSY…ERVIVEHARG (71 aa)). Disordered stretches follow at residues 72 to 95 (GPRRDGSYGSGRSGYGYRRSGRDK) and 169 to 494 (KIRL…HSRS). Residues Ser78 and Ser84 each carry the phosphoserine modification. In terms of domain architecture, RRM 2 spans 104–177 (YRLIVENLSS…RKIRLVEDKP (74 aa)). Composition is skewed to basic residues over residues 179 to 206 (SRRRRSYSRSRSHSRSRSRSRHSRKSRS) and 214 to 246 (SHSKSRSRSRSGSRSRSKSRSRSQSRSRSKKEK). The segment covering 247–256 (SRSPSKEKSR) has biased composition (basic and acidic residues). Positions 257–267 (SRSHSAGKSRS) are enriched in basic residues. Positions 268–278 (KSKDQAEEKIQ) are enriched in basic and acidic residues. Over residues 286–302 (PKSRSPSRHKSKSKSRS) the composition is skewed to basic residues. Residues Ser288, Ser290, and Ser292 each carry the phosphoserine modification. Positions 303–327 (RSQERRVEEEKRGSVSRGRSQEKSL) are enriched in basic and acidic residues. Basic residues-rich tracts occupy residues 328 to 359 (RQSRSRSRSKGGSRSRSRSRSKSKDKRKGRKR) and 367 to 382 (RSRSRSKSERSRKRGS). Residues 411–431 (VSKEREHAKSESSQREGRGES) are compositionally biased toward basic and acidic residues. Phosphoserine occurs at positions 431, 446, 456, 458, and 460. The span at 449–460 (KSKPNLPSESRS) shows a compositional bias: low complexity. A compositionally biased stretch (basic residues) spans 461-494 (RSKSASKTRSRSKSRSRSASRSPSRSRSRSHSRS).

The protein belongs to the splicing factor SR family. Found in a pre-mRNA splicing complex with SRSF4/SFRS4, SRSF5/SFRS5, SNRNP70, SNRPA1, SRRM1 and SRRM2. Interacts with PNN. Extensively phosphorylated on serine residues in the RS domain.

It localises to the nucleus speckle. Plays a role in alternative splice site selection during pre-mRNA splicing. Represses the splicing of MAPT/Tau exon 10. This is Serine/arginine-rich splicing factor 4 (SRSF4) from Homo sapiens (Human).